We begin with the raw amino-acid sequence, 150 residues long: Cytochrome c oxidase subunit 5A, mitochondrial (150 aa).

The transit peptide at 1–41 (MLGAALRRCAVAATTWAGPRGLLHSARTPGPAAAIQSVRCY) directs the protein to the mitochondrion. Residues 2–17 (LGAALRRCAVAATTWA) carry the SIFI-degron motif. N6-acetyllysine is present on residues Lys-87 and Lys-113. Residue Thr-141 is modified to Phosphothreonine.

This sequence belongs to the cytochrome c oxidase subunit 5A family. Component of the cytochrome c oxidase (complex IV, CIV), a multisubunit enzyme composed of 14 subunits. The complex is composed of a catalytic core of 3 subunits MT-CO1, MT-CO2 and MT-CO3, encoded in the mitochondrial DNA, and 11 supernumerary subunits COX4I, COX5A, COX5B, COX6A, COX6B, COX6C, COX7A, COX7B, COX7C, COX8 and NDUFA4, which are encoded in the nuclear genome. The complex exists as a monomer or a dimer and forms supercomplexes (SCs) in the inner mitochondrial membrane with NADH-ubiquinone oxidoreductase (complex I, CI) and ubiquinol-cytochrome c oxidoreductase (cytochrome b-c1 complex, complex III, CIII), resulting in different assemblies (supercomplex SCI(1)III(2)IV(1) and megacomplex MCI(2)III(2)IV(2)). Interacts with AFG1L. Interacts with RAB5IF. In terms of processing, in response to mitochondrial stress, the precursor protein is ubiquitinated by the SIFI complex in the cytoplasm before mitochondrial import, leading to its degradation. Within the SIFI complex, UBR4 initiates ubiquitin chain that are further elongated or branched by KCMF1.

Its subcellular location is the mitochondrion inner membrane. Its pathway is energy metabolism; oxidative phosphorylation. Its function is as follows. Component of the cytochrome c oxidase, the last enzyme in the mitochondrial electron transport chain which drives oxidative phosphorylation. The respiratory chain contains 3 multisubunit complexes succinate dehydrogenase (complex II, CII), ubiquinol-cytochrome c oxidoreductase (cytochrome b-c1 complex, complex III, CIII) and cytochrome c oxidase (complex IV, CIV), that cooperate to transfer electrons derived from NADH and succinate to molecular oxygen, creating an electrochemical gradient over the inner membrane that drives transmembrane transport and the ATP synthase. Cytochrome c oxidase is the component of the respiratory chain that catalyzes the reduction of oxygen to water. Electrons originating from reduced cytochrome c in the intermembrane space (IMS) are transferred via the dinuclear copper A center (CU(A)) of subunit 2 and heme A of subunit 1 to the active site in subunit 1, a binuclear center (BNC) formed by heme A3 and copper B (CU(B)). The BNC reduces molecular oxygen to 2 water molecules using 4 electrons from cytochrome c in the IMS and 4 protons from the mitochondrial matrix. The polypeptide is Cytochrome c oxidase subunit 5A, mitochondrial (COX5A) (Papio anubis (Olive baboon)).